A 981-amino-acid chain; its full sequence is Rab3 GTPase-activating protein catalytic subunit (981 aa).

Residues Ser-83, Ser-379, Ser-537, Ser-579, Ser-581, and Ser-590 each carry the phosphoserine modification. The interval 592–613 is disordered; that stretch reads TEELKGNGQESGKKGGPKEMAN. Residue Ser-664 is modified to Phosphoserine. Thr-908 bears the Phosphothreonine mark. A disordered region spans residues 908-937; the sequence is TPPEEELKRMGSPEERRQNSVSDFPPPAGR. A compositionally biased stretch (basic and acidic residues) spans 912-925; it reads EELKRMGSPEERRQ.

This sequence belongs to the Rab3-GAP catalytic subunit family. As to quaternary structure, the Rab3 GTPase-activating complex is a heterodimer composed of RAB3GAP1 and RAB3GAP2. The Rab3 GTPase-activating complex interacts with DMXL2. Interacts with LMAN1. Ubiquitous.

It localises to the cytoplasm. It is found in the endoplasmic reticulum. The protein localises to the golgi apparatus. Its subcellular location is the cis-Golgi network. Functionally, catalytic subunit of the Rab3 GTPase-activating (Rab3GAP) complex composed of RAB3GAP1 and RAB3GAP2, which has GTPase-activating protein (GAP) activity towards various Rab3 subfamily members (RAB3A, RAB3B, RAB3C and RAB3D), RAB5A and RAB43, and guanine nucleotide exchange factor (GEF) activity towards RAB18. As part of the Rab3GAP complex, acts as a GAP for Rab3 proteins by converting active RAB3-GTP to the inactive form RAB3-GDP. Rab3 proteins are involved in regulated exocytosis of neurotransmitters and hormones. The Rab3GAP complex, acts as a GEF for RAB18 by promoting the conversion of inactive RAB18-GDP to the active form RAB18-GTP. Recruits and stabilizes RAB18 at the cis-Golgi membrane in fibroblasts where RAB18 is most likely activated. Also involved in RAB18 recruitment at the endoplasmic reticulum (ER) membrane where it maintains proper ER structure. Required for normal eye and brain development. May participate in neurodevelopmental processes such as proliferation, migration and differentiation before synapse formation, and non-synaptic vesicular release of neurotransmitters. In Homo sapiens (Human), this protein is Rab3 GTPase-activating protein catalytic subunit.